A 1269-amino-acid polypeptide reads, in one-letter code: Protein strawberry notch homolog 1 (1269 aa).

The disordered stretch occupies residues 21-47 (NDLFDVDGGDAGLATPTPPSVQQQQPP). An N6-acetyllysine modification is found at Lys113. Residues Ser126 and Ser178 each carry the phosphoserine modification. Lys377 is modified (N6-acetyllysine). The segment at 652-725 (PSNNSSPRDS…SLITSQDAVE (74 aa)) is disordered. Residues Ser656, Ser657, and Ser661 each carry the phosphoserine modification. Residues 679 to 693 (SGSESDVSDNEESDY) show a composition bias toward acidic residues. Phosphoserine is present on residues Ser700 and Ser701. Residues 719–746 (TSQDAVERAQQMKKDLLDKLEKLAEDLP) are a coiled coil. Lys1098 carries the N6-acetyllysine modification. Phosphoserine is present on Ser1262.

The protein belongs to the SBNO family.

It is found in the nucleus. Functionally, plays a crucial role in the regulation of neural stem cells (NSCs) proliferation. Enhances the phosphorylation of GSK3B through the PI3K-Akt signaling pathway, thereby upregulating the Wnt/beta-catenin signaling pathway and promoting the proliferation of NSCs. Improves ischemic stroke recovery while inhibiting neuroinflammation through small extracellular vesicles (sEVs)-mediated mechanism. Enhances the secretion of sEVs from NSCs, which in turn inhibit both the MAPK and NF-kappaB pathways in microglia. This inhibition suppresses the pro-inflammatory M1 polarization of microglia, promoting a shift towards the M2 anti-inflammatory phenotype, which is beneficial for reducing neuroinflammation. In Rattus norvegicus (Rat), this protein is Protein strawberry notch homolog 1 (Sbno1).